A 538-amino-acid chain; its full sequence is Probable ribonuclease 3 (538 aa).

2 RNase III domains span residues 24 to 149 (IKSY…LNFG) and 238 to 381 (ASQM…EGYL). In terms of domain architecture, DRBM spans 408–477 (LISQNIEVLH…NYKDLILQLY (70 aa)).

The protein belongs to the ribonuclease III family.

The catalysed reaction is Endonucleolytic cleavage to 5'-phosphomonoester.. Functionally, digests double-stranded RNA. In Acanthamoeba polyphaga (Amoeba), this protein is Probable ribonuclease 3.